We begin with the raw amino-acid sequence, 216 residues long: Sperm microtubule inner protein 8 (216 aa).

As to quaternary structure, microtubule inner protein component of sperm flagellar doublet microtubules. In terms of tissue distribution, expressed in testis.

It is found in the cytoplasm. The protein resides in the cytoskeleton. The protein localises to the flagellum axoneme. In terms of biological role, microtubule inner protein (MIP) part of the dynein-decorated doublet microtubules (DMTs) in flagellum axoneme. May serve to reinforce and thus stabilize the microtubule structure in the sperm flagella. This chain is Sperm microtubule inner protein 8 (Spmip8), found in Mus musculus (Mouse).